A 157-amino-acid polypeptide reads, in one-letter code: Thioredoxin-T (157 aa).

A Thioredoxin domain is found at V2–G107. A disulfide bridge links C32 with C35. The tract at residues E132–H157 is disordered. Residues S147–H157 are compositionally biased toward basic and acidic residues.

It belongs to the thioredoxin family. Testis specific. Not expressed in the embryo. Becomes progressively more strongly expressed during larval and pupal development. In testis, it is strongly expressed in young spermatocytes, and postmeiotic spermatid stages, then expression decreases at the nuclear elongation stage. Strongly expressed in the waste bag, in which material no longer needed for the mature sperm is eliminated. Not expressed in the stem cells and spermatogonial cells.

Its subcellular location is the nucleus. The protein localises to the chromosome. In terms of biological role, probably participates in various redox reactions through the reversible oxidation of its active center dithiol to a disulfide and catalyzes dithiol-disulfide exchange reactions. Its tissue specificity suggests a regulatory role in the germline. The chain is Thioredoxin-T (TrxT) from Drosophila melanogaster (Fruit fly).